The primary structure comprises 309 residues: Diadenylate cyclase (309 aa).

In terms of domain architecture, DAC spans 144–301 (TITLYELFET…DGKIVFETDP (158 aa)).

This sequence belongs to the adenylate cyclase family. DacZ subfamily. The cofactor is Mn(2+).

The enzyme catalyses 2 ATP = 3',3'-c-di-AMP + 2 diphosphate. Functionally, diadenylate cyclase that catalyzes the condensation of 2 ATP molecules into cyclic di-AMP (c-di-AMP). c-di-AMP is a second messenger for intracellular signal transduction involved in the control of important regulatory processes such as osmoregulation. The chain is Diadenylate cyclase from Methanocaldococcus jannaschii (strain ATCC 43067 / DSM 2661 / JAL-1 / JCM 10045 / NBRC 100440) (Methanococcus jannaschii).